The primary structure comprises 493 residues: Activin receptor type-1C (493 aa).

An N-terminal signal peptide occupies residues 1–20; it reads MTRALCSALRQALLLLAAAA. Over 22-113 the chain is Extracellular; sequence LSPGLKCVCL…PNAPKLGPME (92 aa). A helical transmembrane segment spans residues 114–134; the sequence is LAIIITVPVCLLSIAAMLTVW. Residues 135–493 are Cytoplasmic-facing; it reads ACQGRQCSYR…QLCVKEDCKA (359 aa). The region spanning 165–194 is the GS domain; sequence KTLKDLIYDVTASGSGSGLPLLVQRTIART. In terms of domain architecture, Protein kinase spans 195–485; the sequence is IVLQEIVGKG…LRIKKTISQL (291 aa). ATP-binding positions include 201 to 209 and Lys222; that span reads VGKGRFGEV. Asp323 (proton acceptor) is an active-site residue.

It belongs to the protein kinase superfamily. TKL Ser/Thr protein kinase family. TGFB receptor subfamily. Binds the type 2 receptor protein ACVR2A. It depends on Mg(2+) as a cofactor. Mn(2+) serves as cofactor. Present in pancreas, heart, colon, small intestine, ovary and the hippocampus, medulla oblongata and putamen of the brain. Isoform 1, isoform 2, isoform 3 and isoform 4 are all expressed in the placenta throughout pregnancy.

The protein localises to the membrane. It carries out the reaction L-threonyl-[receptor-protein] + ATP = O-phospho-L-threonyl-[receptor-protein] + ADP + H(+). The enzyme catalyses L-seryl-[receptor-protein] + ATP = O-phospho-L-seryl-[receptor-protein] + ADP + H(+). Functionally, serine/threonine protein kinase which forms a receptor complex on ligand binding. The receptor complex consists of 2 type II and 2 type I transmembrane serine/threonine kinases. Type II receptors phosphorylate and activate type I receptors which autophosphorylate, then bind and activate SMAD transcriptional regulators, SMAD2 and SMAD3. Receptor for activin AB, activin B, activin E and NODAL. Upon NODAL binding, activation results in increased apoptosis and reduced proliferation through suppression of AKT signaling and the activation of Smad2-dependent signaling pathway in pancreatic beta-cells, trophoblasts, epithelial or neuronal cells. Acts as a positive regulator for macrophage activation partially through down-regulation of PPARG expression. This chain is Activin receptor type-1C, found in Homo sapiens (Human).